We begin with the raw amino-acid sequence, 149 residues long: D-aminoacyl-tRNA deacylase (149 aa).

Positions 137 to 138 match the Gly-cisPro motif, important for rejection of L-amino acids motif; the sequence is GP.

The protein belongs to the DTD family. In terms of assembly, homodimer.

Its subcellular location is the cytoplasm. The enzyme catalyses glycyl-tRNA(Ala) + H2O = tRNA(Ala) + glycine + H(+). It catalyses the reaction a D-aminoacyl-tRNA + H2O = a tRNA + a D-alpha-amino acid + H(+). An aminoacyl-tRNA editing enzyme that deacylates mischarged D-aminoacyl-tRNAs. Also deacylates mischarged glycyl-tRNA(Ala), protecting cells against glycine mischarging by AlaRS. Acts via tRNA-based rather than protein-based catalysis; rejects L-amino acids rather than detecting D-amino acids in the active site. By recycling D-aminoacyl-tRNA to D-amino acids and free tRNA molecules, this enzyme counteracts the toxicity associated with the formation of D-aminoacyl-tRNA entities in vivo and helps enforce protein L-homochirality. The polypeptide is D-aminoacyl-tRNA deacylase (Thermotoga petrophila (strain ATCC BAA-488 / DSM 13995 / JCM 10881 / RKU-1)).